A 445-amino-acid polypeptide reads, in one-letter code: 3-phosphoshikimate 1-carboxyvinyltransferase (445 aa).

3-phosphoshikimate contacts are provided by Lys-28, Ser-29, and Arg-33. Phosphoenolpyruvate is bound at residue Lys-28. Phosphoenolpyruvate-binding residues include Gly-101 and Arg-129. Residues Ser-175, Gln-177, Asp-328, and Lys-355 each coordinate 3-phosphoshikimate. Gln-177 provides a ligand contact to phosphoenolpyruvate. Asp-328 functions as the Proton acceptor in the catalytic mechanism. Positions 359 and 402 each coordinate phosphoenolpyruvate.

Belongs to the EPSP synthase family. As to quaternary structure, monomer.

It is found in the cytoplasm. The catalysed reaction is 3-phosphoshikimate + phosphoenolpyruvate = 5-O-(1-carboxyvinyl)-3-phosphoshikimate + phosphate. Its pathway is metabolic intermediate biosynthesis; chorismate biosynthesis; chorismate from D-erythrose 4-phosphate and phosphoenolpyruvate: step 6/7. Catalyzes the transfer of the enolpyruvyl moiety of phosphoenolpyruvate (PEP) to the 5-hydroxyl of shikimate-3-phosphate (S3P) to produce enolpyruvyl shikimate-3-phosphate and inorganic phosphate. This Rhodopseudomonas palustris (strain BisA53) protein is 3-phosphoshikimate 1-carboxyvinyltransferase.